The following is a 161-amino-acid chain: Putative acetyltransferase SAR0816 (161 aa).

This sequence belongs to the transferase hexapeptide repeat family.

In Staphylococcus aureus (strain MRSA252), this protein is Putative acetyltransferase SAR0816.